We begin with the raw amino-acid sequence, 461 residues long: Kynurenine 3-monooxygenase (461 aa).

The next 2 membrane-spanning stretches (helical) occupy residues 395 to 415 (TIMN…VTFS) and 432 to 452 (ILSR…AAGI).

The protein belongs to the aromatic-ring hydroxylase family. KMO subfamily. It depends on FAD as a cofactor.

It is found in the mitochondrion. The protein resides in the membrane. It carries out the reaction L-kynurenine + NADPH + O2 + H(+) = 3-hydroxy-L-kynurenine + NADP(+) + H2O. It functions in the pathway cofactor biosynthesis; NAD(+) biosynthesis; quinolinate from L-kynurenine: step 1/3. Its function is as follows. Catalyzes the hydroxylation of L-kynurenine (L-Kyn) to form 3-hydroxy-L-kynurenine (L-3OHKyn). Required for synthesis of quinolinic acid. The protein is Kynurenine 3-monooxygenase of Caenorhabditis elegans.